Reading from the N-terminus, the 122-residue chain is Large ribosomal subunit protein uL14 (122 aa).

The protein belongs to the universal ribosomal protein uL14 family. As to quaternary structure, part of the 50S ribosomal subunit. Forms a cluster with proteins L3 and L19. In the 70S ribosome, L14 and L19 interact and together make contacts with the 16S rRNA in bridges B5 and B8.

Binds to 23S rRNA. Forms part of two intersubunit bridges in the 70S ribosome. The protein is Large ribosomal subunit protein uL14 of Acetivibrio thermocellus (strain ATCC 27405 / DSM 1237 / JCM 9322 / NBRC 103400 / NCIMB 10682 / NRRL B-4536 / VPI 7372) (Clostridium thermocellum).